Reading from the N-terminus, the 139-residue chain is HTH-type transcriptional repressor Mb2911 (139 aa).

The 133-residue stretch at 6-138 folds into the HTH marR-type domain; it reads DAPLGYLLYR…FKRMLEKLGS (133 aa).

In terms of assembly, homodimer.

Represses expression of the HQNO methyltransferase htm gene by binding to its promoter region. The chain is HTH-type transcriptional repressor Mb2911 from Mycobacterium bovis (strain ATCC BAA-935 / AF2122/97).